The primary structure comprises 250 residues: Ribonuclease HII (250 aa).

The RNase H type-2 domain occupies Glu-66–Lys-250. Residues Asp-72, Glu-73, and Asp-164 each contribute to the a divalent metal cation site.

This sequence belongs to the RNase HII family. Mn(2+) is required as a cofactor. It depends on Mg(2+) as a cofactor.

The protein resides in the cytoplasm. It catalyses the reaction Endonucleolytic cleavage to 5'-phosphomonoester.. Its function is as follows. Endonuclease that specifically degrades the RNA of RNA-DNA hybrids. The protein is Ribonuclease HII of Lactobacillus helveticus (strain DPC 4571).